A 254-amino-acid polypeptide reads, in one-letter code: Major prion protein (254 aa).

The signal sequence occupies residues 1 to 22; the sequence is MANLGYWLLALFVTMWTDVGLC. The interval 23–38 is interaction with ADGRG6; the sequence is KKRPKPGGWNTGGSRY. Residues 23–231 are interaction with GRB2, ERI3 and SYN1; that stretch reads KKRPKPGGWN…QAYYDGRRSS (209 aa). Residues 25 to 104 form a disordered region; it reads RPKPGGWNTG…HNQWNKPSKP (80 aa). Position 44 is a hydroxyproline (P44). 5 repeat units span residues 51 to 58, 59 to 66, 67 to 74, 75 to 82, and 83 to 90. Positions 51-90 are 5 X 8 AA tandem repeats of P-H-G-G-G-W-G-Q; the sequence is PQGGTWGQPHGGGWGQPHGGSWGQPHGGSWGQPHGGGWGQ. Over residues 54-94 the composition is skewed to gly residues; it reads GTWGQPHGGGWGQPHGGSWGQPHGGSWGQPHGGGWGQGGGT. Residues H60, G61, G62, H68, G69, G70, H76, G77, G78, H84, G85, and G86 each contribute to the Cu(2+) site. C178 and C213 are joined by a disulfide. N180 and N196 each carry an N-linked (GlcNAc...) asparagine glycan. S230 is lipidated: GPI-anchor amidated serine. Positions 231–254 are cleaved as a propeptide — removed in mature form; it reads SSTVLFSSPPVILLISFLIFLIVG.

This sequence belongs to the prion family. In terms of assembly, monomer and homodimer. Has a tendency to aggregate into amyloid fibrils containing a cross-beta spine, formed by a steric zipper of superposed beta-strands. Soluble oligomers may represent an intermediate stage on the path to fibril formation. Copper binding may promote oligomerization. Interacts with GRB2, APP, ERI3/PRNPIP and SYN1. Mislocalized cytosolically exposed PrP interacts with MGRN1; this interaction alters MGRN1 subcellular location and causes lysosomal enlargement. Interacts with APP. Interacts with KIAA1191. Interacts with ADGRG6. In terms of processing, N-glycosylated. In terms of tissue distribution, highly expressed in the brain, lung, kidney and heart. Expressed at low levels in the liver and spleen.

The protein resides in the cell membrane. It is found in the golgi apparatus. Its function is as follows. Its primary physiological function is unclear. May play a role in neuronal development and synaptic plasticity. May be required for neuronal myelin sheath maintenance. May promote myelin homeostasis through acting as an agonist for ADGRG6 receptor. May play a role in iron uptake and iron homeostasis. Soluble oligomers are toxic to cultured neuroblastoma cells and induce apoptosis (in vitro). Association with GPC1 (via its heparan sulfate chains) targets PRNP to lipid rafts. Also provides Cu(2+) or Zn(2+) for the ascorbate-mediated GPC1 deaminase degradation of its heparan sulfate side chains. This Mus musculus (Mouse) protein is Major prion protein (Prnp).